A 540-amino-acid polypeptide reads, in one-letter code: Chaperonin GroEL (540 aa).

ATP is bound by residues 29 to 32 (TLGP), 86 to 90 (DGTTT), Gly-413, 476 to 478 (NAA), and Asp-492.

This sequence belongs to the chaperonin (HSP60) family. In terms of assembly, forms a cylinder of 14 subunits composed of two heptameric rings stacked back-to-back. Interacts with the co-chaperonin GroES.

It localises to the cytoplasm. It carries out the reaction ATP + H2O + a folded polypeptide = ADP + phosphate + an unfolded polypeptide.. Together with its co-chaperonin GroES, plays an essential role in assisting protein folding. The GroEL-GroES system forms a nano-cage that allows encapsulation of the non-native substrate proteins and provides a physical environment optimized to promote and accelerate protein folding. The sequence is that of Chaperonin GroEL from Streptococcus agalactiae serotype V (strain ATCC BAA-611 / 2603 V/R).